The sequence spans 165 residues: Peptide methionine sulfoxide reductase MsrA (165 aa).

Cys10 is a catalytic residue.

Belongs to the MsrA Met sulfoxide reductase family.

The catalysed reaction is L-methionyl-[protein] + [thioredoxin]-disulfide + H2O = L-methionyl-(S)-S-oxide-[protein] + [thioredoxin]-dithiol. It carries out the reaction [thioredoxin]-disulfide + L-methionine + H2O = L-methionine (S)-S-oxide + [thioredoxin]-dithiol. In terms of biological role, has an important function as a repair enzyme for proteins that have been inactivated by oxidation. Catalyzes the reversible oxidation-reduction of methionine sulfoxide in proteins to methionine. The polypeptide is Peptide methionine sulfoxide reductase MsrA (Campylobacter jejuni subsp. jejuni serotype O:6 (strain 81116 / NCTC 11828)).